The sequence spans 410 residues: E3 ubiquitin-protein ligase MARCHF4 (410 aa).

The N-terminal stretch at 1-18 is a signal peptide; sequence MLMPLCGLLWWWWCCCSG. The interval 92-136 is disordered; the sequence is GPREVVGREPPPVPPPPPLPPSSVEDDWGGPATEPPASLLSSASS. Positions 100 to 112 are enriched in pro residues; sequence EPPPVPPPPPLPP. Low complexity predominate over residues 126-136; that stretch reads PPASLLSSASS. The segment at 155-215 adopts an RING-CH-type zinc-finger fold; the sequence is DSGMRTPLCR…ELCYYKYHVI (61 aa). 8 residues coordinate Zn(2+): cysteine 163, cysteine 166, cysteine 179, cysteine 181, histidine 189, cysteine 192, cysteine 205, and cysteine 208. Transmembrane regions (helical) follow at residues 238-258 and 272-292; these read VAAA…LIWS and LFQI…GLII. 2 disordered regions span residues 324–372 and 390–410; these read EDQK…SGPL and PHEQ…VTTV. Positions 333 to 346 are enriched in polar residues; the sequence is NPRTSSSTQANIPS. Low complexity predominate over residues 352 to 366; sequence AGTPAPEQGPAQAAG.

As to expression, expressed in brain and placenta.

The protein localises to the golgi apparatus membrane. It carries out the reaction S-ubiquitinyl-[E2 ubiquitin-conjugating enzyme]-L-cysteine + [acceptor protein]-L-lysine = [E2 ubiquitin-conjugating enzyme]-L-cysteine + N(6)-ubiquitinyl-[acceptor protein]-L-lysine.. Its pathway is protein modification; protein ubiquitination. In terms of biological role, E3 ubiquitin-protein ligase that may mediate ubiquitination of MHC-I and CD4, and promote their subsequent endocytosis and sorting to lysosomes via multivesicular bodies. E3 ubiquitin ligases accept ubiquitin from an E2 ubiquitin-conjugating enzyme in the form of a thioester and then directly transfer the ubiquitin to targeted substrates. The polypeptide is E3 ubiquitin-protein ligase MARCHF4 (Homo sapiens (Human)).